The primary structure comprises 507 residues: Cytochrome P450 71D2 (507 aa).

The next 2 helical transmembrane spans lie at 6–26 (LPFN…LIYG) and 447–467 (ICPG…LLLY). Cys-448 serves as a coordination point for heme.

The protein belongs to the cytochrome P450 family.

It localises to the membrane. The chain is Cytochrome P450 71D2 from Catharanthus roseus (Madagascar periwinkle).